We begin with the raw amino-acid sequence, 259 residues long: Global transcriptional regulator CodY (259 aa).

The tract at residues 1–155 is GAF domain; it reads MELLAKTRKL…SSTVVGMEIL (155 aa). The segment at residues 203-222 is a DNA-binding region (H-T-H motif); that stretch reads ASKIADRVGITRSVIVNALR. Residue Ser-215 is modified to Phosphoserine.

This sequence belongs to the CodY family.

Its subcellular location is the cytoplasm. In terms of biological role, DNA-binding global transcriptional regulator which is involved in the adaptive response to starvation and acts by directly or indirectly controlling the expression of numerous genes in response to nutrient availability. During rapid exponential growth, CodY is highly active and represses genes whose products allow adaptation to nutrient depletion. The chain is Global transcriptional regulator CodY from Bacillus anthracis (strain A0248).